The chain runs to 120 residues: U13-lycotoxin-Ls1a (120 aa).

A signal peptide spans 1–16 (MKILFVLISILHAVYC). The propeptide occupies 17–54 (FSSEEDVDSAYLANELEPVEDINSEQYAALEPKEEHER). 4 cysteine pairs are disulfide-bonded: cysteine 56-cysteine 70, cysteine 63-cysteine 76, cysteine 69-cysteine 87, and cysteine 78-cysteine 85. The region spanning 56–95 (CADMGQDCKDDCDCCLNIATCNCWFGRYFCSCTFGDYQTC) is the Agouti domain.

This sequence belongs to the neurotoxin 05 (agouti) family. In terms of processing, contains 6 disulfide bonds. As to expression, expressed by the venom gland.

It is found in the secreted. This Lycosa singoriensis (Wolf spider) protein is U13-lycotoxin-Ls1a.